We begin with the raw amino-acid sequence, 141 residues long: VLSANDKSNVKAAWGKVGNHAPEYGAEALERMFLSFPTTKTYFPHFDLSHGSSQVKAHGKKVADALTKAVGHLDDLPGALSDLSDLHAHKLRVDPVNFKLLSHCLLVTLAAHHPSDFTPAAHASLDKFLANVSTVLTSKYR.

The Globin domain maps to 1-141 (VLSANDKSNV…VSTVLTSKYR (141 aa)). Phosphoserine is present on Ser3. 2 positions are modified to N6-succinyllysine: Lys7 and Lys11. Lys16 carries the post-translational modification N6-acetyllysine; alternate. N6-succinyllysine; alternate is present on Lys16. At Tyr24 the chain carries Phosphotyrosine. Ser35 is modified (phosphoserine). Lys40 bears the N6-succinyllysine mark. Ser49 is subject to Phosphoserine. Residue His58 participates in O2 binding. Residue His87 coordinates heme b. At Ser102 the chain carries Phosphoserine. Residue Thr108 is modified to Phosphothreonine. At Ser124 the chain carries Phosphoserine. Residues Thr134 and Thr137 each carry the phosphothreonine modification. Ser138 bears the Phosphoserine mark.

It belongs to the globin family. In terms of assembly, heterotetramer of two alpha chains and two beta chains. As to expression, red blood cells.

Functionally, involved in oxygen transport from the lung to the various peripheral tissues. In terms of biological role, hemopressin acts as an antagonist peptide of the cannabinoid receptor CNR1. Hemopressin-binding efficiently blocks cannabinoid receptor CNR1 and subsequent signaling. The polypeptide is Hemoglobin subunit alpha (HBA) (Hippopotamus amphibius (Hippopotamus)).